The following is a 337-amino-acid chain: Phosphatidate cytidylyltransferase, mitochondrial (337 aa).

This sequence belongs to the TAM41 family. It depends on Mg(2+) as a cofactor. Brain and liver.

The protein localises to the mitochondrion inner membrane. It carries out the reaction a 1,2-diacyl-sn-glycero-3-phosphate + CTP + H(+) = a CDP-1,2-diacyl-sn-glycerol + diphosphate. It functions in the pathway phospholipid metabolism; CDP-diacylglycerol biosynthesis; CDP-diacylglycerol from sn-glycerol 3-phosphate: step 3/3. Functionally, catalyzes the conversion of phosphatidic acid (PA) to CDP-diacylglycerol (CDP-DAG), an essential intermediate in the synthesis of phosphatidylglycerol, cardiolipin and phosphatidylinositol. This Rattus norvegicus (Rat) protein is Phosphatidate cytidylyltransferase, mitochondrial (Tamm41).